The following is a 432-amino-acid chain: MLGNSAPGPATREAGSALLALQQTALQEDQENINPEKAAPVQQPRTRAALAVLKSGNPRGLAQQQRPKTRRVAPLKDLPVNDEHVTVPPWKANSKQPAFTIHVDEAEKEAQKKPAESQKIEREDALAFNSAISLPGPRKPLVPLDYPMDGSFESPHTMDMSIILEDEKPVSVNEVPDYHEDIHTYLREMEVKCKPKVGYMKKQPDITNSMRAILVDWLVEVGEEYKLQNETLHLAVNYIDRFLSSMSVLRGKLQLVGTAAMLLASKFEEIYPPEVAEFVYITDDTYTKKQVLRMEHLVLKVLTFDLAAPTVNQFLTQYFLHQQPANCKVESLAMFLGELSLIDADPYLKYLPSVIAGAAFHLALYTVTGQSWPESLIRKTGYTLESLKPCLMDLHQTYLKAPQHAQQSIREKYKNSKYHGVSLLNPPETLNL.

M1 is modified (N-acetylmethionine). Position 5 is a phosphoserine (S5). Disordered stretches follow at residues 26–45 and 55–75; these read LQED…QQPR and SGNP…VAPL. Phosphoserine is present on S55.

Belongs to the cyclin family. Cyclin AB subfamily. In terms of assembly, interacts with the CDK1 and CDK2 protein kinases to form serine/threonine kinase holoenzyme complexes. Interacts with CDK1 (hyperphosphorylated form in G1 and underphosphorylated forms in S and G2). Interacts with CDK2; the interaction increases from G1 to G2. Interacts (associated with CDK2 but not with CDK1) with SCAPER; regulates the activity of CCNA2/CDK2 by transiently maintaining CCNA2 in the cytoplasm. Forms a ternary complex with CDK2 and CDKN1B; CDKN1B inhibits the kinase activity of CDK2 through conformational rearrangements. Interacts with INCA1. As to quaternary structure, (Microbial infection) Interacts with human cytomegalovirus protein UL32. Polyubiquitinated via 'Lys-11'-linked ubiquitin by the anaphase-promoting complex (APC/C), leading to its degradation by the proteasome. Deubiquitinated and stabilized by USP37 enables entry into S phase. Ubiquitinated during the G1 phase by the SCF(FBXO31) complex, leading to its proteasomal degradation.

It localises to the nucleus. The protein localises to the cytoplasm. Functionally, cyclin which controls both the G1/S and the G2/M transition phases of the cell cycle. Functions through the formation of specific serine/threonine protein kinase holoenzyme complexes with the cyclin-dependent protein kinases CDK1 or CDK2. The cyclin subunit confers the substrate specificity of these complexes and differentially interacts with and activates CDK1 and CDK2 throughout the cell cycle. In Homo sapiens (Human), this protein is Cyclin-A2.